Reading from the N-terminus, the 221-residue chain is Translation initiation factor 6 (221 aa).

This sequence belongs to the eIF-6 family.

Binds to the 50S ribosomal subunit and prevents its association with the 30S ribosomal subunit to form the 70S initiation complex. The sequence is that of Translation initiation factor 6 from Methanospirillum hungatei JF-1 (strain ATCC 27890 / DSM 864 / NBRC 100397 / JF-1).